Reading from the N-terminus, the 338-residue chain is Citramalyl-CoA lyase, mitochondrial (338 aa).

Residues 1 to 20 constitute a mitochondrion transit peptide; that stretch reads MALCVLRNTVRGAAALPRLK. Tyrosine 48, lysine 55, and lysine 59 together coordinate substrate. An N6-acetyllysine mark is found at lysine 55, lysine 59, and lysine 64. N6-acetyllysine; alternate is present on residues lysine 80 and lysine 90. 2 positions are modified to N6-succinyllysine; alternate: lysine 80 and lysine 90. A substrate-binding site is contributed by arginine 105. Glutamate 169 and aspartate 204 together coordinate Mg(2+). 270–271 contacts substrate; sequence IH. At lysine 307 the chain carries N6-succinyllysine. Aspartate 318 is an active-site residue.

Belongs to the HpcH/HpaI aldolase family. Citrate lyase beta subunit-like subfamily. As to quaternary structure, homotrimer. Mg(2+) serves as cofactor. As to expression, detected in brown fat, brain, liver, kidney, heart, skeletal muscle and ovary (at protein level).

The protein localises to the mitochondrion. It carries out the reaction glyoxylate + acetyl-CoA + H2O = (S)-malate + CoA + H(+). The enzyme catalyses propanoyl-CoA + glyoxylate + H2O = 3-methylmalate + CoA + H(+). The catalysed reaction is (3S)-citramalyl-CoA = pyruvate + acetyl-CoA. It catalyses the reaction (S)-malyl-CoA + H2O = (S)-malate + CoA + H(+). In terms of biological role, mitochondrial citramalyl-CoA lyase indirectly involved in the vitamin B12 metabolism. Converts citramalyl-CoA into acetyl-CoA and pyruvate in the C5-dicarboxylate catabolism pathway. The C5-dicarboxylate catabolism pathway is required to detoxify itaconate, a vitamin B12-poisoning metabolite. Also acts as a malate synthase in vitro, converting glyoxylate and acetyl-CoA to malate. Also displays malyl-CoA thioesterase activity. Also acts as a beta-methylmalate synthase in vitro, by mediating conversion of glyoxylate and propionyl-CoA to beta-methylmalate. Also has very weak citramalate synthase activity in vitro. The chain is Citramalyl-CoA lyase, mitochondrial from Mus musculus (Mouse).